A 273-amino-acid polypeptide reads, in one-letter code: MARREVDDSYTNGSVVEVVSIEEGSKMDKEDDHQNPQAPDGGDVVVCGMPMSFTFLQMLLAEFLATFFLMFAGLGAITVEEKKGAVTFPGVAVAWGAAVMAMVYAVGHVSGAHLNPAVTLGFAVAGRFPWRRAPAYALAQTAAATAASVVLRLMFGGRHAPVPATLPGGAHAQSLVIEFVITFYLMFVIMAVATDDQAVGHMAGVAVGGTIMLNVLFAGPVSGASMNPARSIGPALVGSKYTALWVYILGPFAGAAAGAWAYSLIRLTGDRTD.

Transmembrane regions (helical) follow at residues 59-79 and 86-106; these read LLAE…AITV and VTFP…VYAV. The short motif at 115 to 117 is the NPA 1 element; sequence NPA. Transmembrane regions (helical) follow at residues 133 to 155, 174 to 194, and 198 to 218; these read APAY…RLMF, SLVI…AVAT, and AVGH…VLFA. The NPA 2 signature appears at 227–229; sequence NPA. Residues 245–265 traverse the membrane as a helical segment; sequence WVYILGPFAGAAAGAWAYSLI.

This sequence belongs to the MIP/aquaporin (TC 1.A.8) family. NIP (TC 1.A.8.12) subfamily. Expressed in leaves.

The protein localises to the membrane. In terms of biological role, aquaporins facilitate the transport of water and small neutral solutes across cell membranes. The chain is Aquaporin NIP1-4 (NIP1-4) from Oryza sativa subsp. japonica (Rice).